Reading from the N-terminus, the 64-residue chain is Large ribosomal subunit protein bL35 (64 aa).

A compositionally biased stretch (basic residues) spans 1 to 26 (MPKMKSHRGASKRFKRTASGKLKRGR). 2 disordered regions span residues 1–28 (MPKMKSHRGASKRFKRTASGKLKRGRAY) and 33–52 (FGNKSTKAKRKLRKASMVSS).

Belongs to the bacterial ribosomal protein bL35 family.

The chain is Large ribosomal subunit protein bL35 from Exiguobacterium sibiricum (strain DSM 17290 / CCUG 55495 / CIP 109462 / JCM 13490 / 255-15).